The primary structure comprises 535 residues: Glutamate--cysteine ligase (535 aa).

It belongs to the glutamate--cysteine ligase type 1 family. Type 1 subfamily.

It catalyses the reaction L-cysteine + L-glutamate + ATP = gamma-L-glutamyl-L-cysteine + ADP + phosphate + H(+). It functions in the pathway sulfur metabolism; glutathione biosynthesis; glutathione from L-cysteine and L-glutamate: step 1/2. The sequence is that of Glutamate--cysteine ligase from Pseudomonas syringae pv. syringae.